Consider the following 183-residue polypeptide: Acireductone dioxygenase (183 aa).

Residues 1-21 (MVQAWYMDSDTTTDQREEHQL) are disordered. 4 residues coordinate Fe(2+): His90, His92, Glu96, and His135. Positions 90, 92, 96, and 135 each coordinate Ni(2+).

The protein belongs to the acireductone dioxygenase (ARD) family. Requires Fe(2+) as cofactor. It depends on Ni(2+) as a cofactor.

Its subcellular location is the cytoplasm. It is found in the nucleus. The enzyme catalyses 1,2-dihydroxy-5-(methylsulfanyl)pent-1-en-3-one + O2 = 4-methylsulfanyl-2-oxobutanoate + formate + 2 H(+). It catalyses the reaction 1,2-dihydroxy-5-(methylsulfanyl)pent-1-en-3-one + O2 = 3-(methylsulfanyl)propanoate + CO + formate + 2 H(+). Its pathway is amino-acid biosynthesis; L-methionine biosynthesis via salvage pathway; L-methionine from S-methyl-5-thio-alpha-D-ribose 1-phosphate: step 5/6. Its function is as follows. Catalyzes 2 different reactions between oxygen and the acireductone 1,2-dihydroxy-3-keto-5-methylthiopentene (DHK-MTPene) depending upon the metal bound in the active site. Fe-containing acireductone dioxygenase (Fe-ARD) produces formate and 2-keto-4-methylthiobutyrate (KMTB), the alpha-ketoacid precursor of methionine in the methionine recycle pathway. Ni-containing acireductone dioxygenase (Ni-ARD) produces methylthiopropionate, carbon monoxide and formate, and does not lie on the methionine recycle pathway. The protein is Acireductone dioxygenase of Ixodes scapularis (Black-legged tick).